The primary structure comprises 375 residues: tRNA-specific 2-thiouridylase MnmA (375 aa).

Residues 12 to 19 and Met38 each bind ATP; that span reads GMSGGVDS. Residues 98 to 100 form an interaction with target base in tRNA region; it reads NPD. Cys103 functions as the Nucleophile in the catalytic mechanism. Residues Cys103 and Cys200 are joined by a disulfide bond. Residue Gly127 coordinates ATP. The interaction with tRNA stretch occupies residues 150–152; that stretch reads KDQ. Catalysis depends on Cys200, which acts as the Cysteine persulfide intermediate. An interaction with tRNA region spans residues 312 to 313; that stretch reads RY.

This sequence belongs to the MnmA/TRMU family.

Its subcellular location is the cytoplasm. The enzyme catalyses S-sulfanyl-L-cysteinyl-[protein] + uridine(34) in tRNA + AH2 + ATP = 2-thiouridine(34) in tRNA + L-cysteinyl-[protein] + A + AMP + diphosphate + H(+). Catalyzes the 2-thiolation of uridine at the wobble position (U34) of tRNA, leading to the formation of s(2)U34. The polypeptide is tRNA-specific 2-thiouridylase MnmA (Lactobacillus gasseri (strain ATCC 33323 / DSM 20243 / BCRC 14619 / CIP 102991 / JCM 1131 / KCTC 3163 / NCIMB 11718 / NCTC 13722 / AM63)).